Consider the following 1035-residue polypeptide: Potassium-transporting ATPase alpha chain 1 (1035 aa).

The tract at residues 1–41 (MGKAENYELYSVELGPGPGGDMAAKMSKKKKAGGGGGKRKE) is disordered. Topologically, residues 1–98 (MGKAENYELY…NALRPPRGTP (98 aa)) are cytoplasmic. 2 positions are modified to phosphotyrosine: Tyr7 and Tyr10. Positions 26-40 (MSKKKKAGGGGGKRK) are enriched in basic residues. At Ser27 the chain carries Phosphoserine. Residues 99–119 (EYVKFARQLAGGLQCLMWVAA) traverse the membrane as a helical segment. Over 120-142 (AICLIAFAIQASEGDLTTDDNLY) the chain is Lumenal. The helical transmembrane segment at 143 to 163 (LAIALIAVVVVTGCFGYYQEF) threads the bilayer. Residues 164-299 (KSTNIIASFK…NEKTPIAIEI (136 aa)) lie on the Cytoplasmic side of the membrane. The helical transmembrane segment at 300–319 (EHFVDIIAGLAILFGATFFI) threads the bilayer. At 320–331 (VAMCIGYTFLRA) the chain is on the lumenal side. A helical transmembrane segment spans residues 332-349 (MVFFMAIVVAYVPEGLLA). K(+)-binding residues include Val340, Ala341, Val343, and Glu345. The Cytoplasmic portion of the chain corresponds to 350–783 (TVTVCLSLTA…EQGRLIFDNL (434 aa)). Residue Asp387 is the 4-aspartylphosphate intermediate of the active site. Asp387 and Thr389 together coordinate Mg(2+). 2 positions are modified to phosphoserine: Ser463 and Ser601. Mg(2+) is bound by residues Asp728 and Asp732. A helical membrane pass occupies residues 784-803 (KKSIAYTLTKNIPELTPYLI). Glu797 contributes to the K(+) binding site. Residues 804–813 (YITVSVPLPL) are Lumenal-facing. Residues 814-834 (GCITILFIELCTDIFPSVSLA) form a helical membrane-spanning segment. Glu822 is a K(+) binding site. Topologically, residues 835–854 (YEKAESDIMHLRPRNPKRDR) are cytoplasmic. At Ser840 the chain carries Phosphoserine. A helical transmembrane segment spans residues 855-877 (LVNEPLAAYSYFQIGAIQSFAGF). At 878 to 929 (TDYFTAMAQEGWFPLLCVGLRAQWEDHHLQDLQDSYGQEWTFGQRLYQQYTC) the chain is on the lumenal side. Residues 930–949 (YTVFFISIEVCQIADVLIRK) traverse the membrane as a helical segment. Over 950–963 (TRRLSAFQQGFFRN) the chain is Cytoplasmic. A Phosphoserine; by PKA modification is found at Ser954. The helical transmembrane segment at 964–982 (KILVIAIVFQVCIGCFLCY) threads the bilayer. The Lumenal portion of the chain corresponds to 983 to 997 (CPGMPNIFNFMPIRF). A helical transmembrane segment spans residues 998–1018 (QWWLVPLPYGILIFVYDEIRK). At 1019-1035 (LGVRCCPGSWWDQELYY) the chain is on the cytoplasmic side.

Belongs to the cation transport ATPase (P-type) (TC 3.A.3) family. Type IIC subfamily. The gastric H(+)/K(+) ATPase pump is composed of the catalytic alpha subunit ATP4A and the regulatory beta subunit ATP4B. Interacts (via the P-domain) with ATP4B (via N-terminus); this interaction stabilizes the lumenal-open E2 conformation state and prevents the reverse reaction of the transport cycle. Expressed in gastric parietal cells (at protein level).

The protein resides in the apical cell membrane. It carries out the reaction K(+)(out) + ATP + H2O + H(+)(in) = K(+)(in) + ADP + phosphate + 2 H(+)(out). The catalytic subunit of the gastric H(+)/K(+) ATPase pump which transports H(+) ions in exchange for K(+) ions across the apical membrane of parietal cells. Uses ATP as an energy source to pump H(+) ions to the gastric lumen while transporting K(+) ion from the lumen into the cell. Remarkably generates a million-fold proton gradient across the gastric parietal cell membrane, acidifying the gastric juice down to pH 1. Within a transport cycle, the transfer of a H(+) ion across the membrane is coupled to ATP hydrolysis and is associated with a transient phosphorylation that shifts the pump conformation from inward-facing (E1) to outward-facing state (E2). The release of the H(+) ion in the stomach lumen is followed by binding of K(+) ion converting the pump conformation back to the E1 state. The sequence is that of Potassium-transporting ATPase alpha chain 1 from Homo sapiens (Human).